The following is a 66-amino-acid chain: MFKEYKIYKFFEQVKQETYKVVWPTRKELVASTLVVVVAVFIFSLTCLVLDYSIHNIMQLLLNIGK.

Residues 29 to 49 (LVASTLVVVVAVFIFSLTCLV) form a helical membrane-spanning segment.

The protein belongs to the SecE/SEC61-gamma family. Component of the Sec protein translocase complex. Heterotrimer consisting of SecY, SecE and SecG subunits. The heterotrimers can form oligomers, although 1 heterotrimer is thought to be able to translocate proteins. Interacts with the ribosome. Interacts with SecDF, and other proteins may be involved. Interacts with SecA.

Its subcellular location is the cell inner membrane. Functionally, essential subunit of the Sec protein translocation channel SecYEG. Clamps together the 2 halves of SecY. May contact the channel plug during translocation. The protein is Protein translocase subunit SecE of Rickettsia rickettsii.